The chain runs to 331 residues: Ketol-acid reductoisomerase (NADP(+)) (331 aa).

Positions 2–182 (AQLFYDTDAD…GGTRAGILET (181 aa)) constitute a KARI N-terminal Rossmann domain. NADP(+)-binding positions include 25-28 (YGSQ), S51, S53, and 83-86 (DEFQ). H108 is an active-site residue. G134 is a binding site for NADP(+). The KARI C-terminal knotted domain occupies 183–328 (NFKEETETDL…KGLRSMFSWL (146 aa)). D191, E195, E227, and E231 together coordinate Mg(2+). S252 provides a ligand contact to substrate.

It belongs to the ketol-acid reductoisomerase family. Mg(2+) is required as a cofactor.

It catalyses the reaction (2R)-2,3-dihydroxy-3-methylbutanoate + NADP(+) = (2S)-2-acetolactate + NADPH + H(+). The catalysed reaction is (2R,3R)-2,3-dihydroxy-3-methylpentanoate + NADP(+) = (S)-2-ethyl-2-hydroxy-3-oxobutanoate + NADPH + H(+). It participates in amino-acid biosynthesis; L-isoleucine biosynthesis; L-isoleucine from 2-oxobutanoate: step 2/4. Its pathway is amino-acid biosynthesis; L-valine biosynthesis; L-valine from pyruvate: step 2/4. Its function is as follows. Involved in the biosynthesis of branched-chain amino acids (BCAA). Catalyzes an alkyl-migration followed by a ketol-acid reduction of (S)-2-acetolactate (S2AL) to yield (R)-2,3-dihydroxy-isovalerate. In the isomerase reaction, S2AL is rearranged via a Mg-dependent methyl migration to produce 3-hydroxy-3-methyl-2-ketobutyrate (HMKB). In the reductase reaction, this 2-ketoacid undergoes a metal-dependent reduction by NADPH to yield (R)-2,3-dihydroxy-isovalerate. The polypeptide is Ketol-acid reductoisomerase (NADP(+)) (Synechococcus sp. (strain WH7803)).